Here is a 316-residue protein sequence, read N- to C-terminus: uncharacterized protein (316 aa).

Threonine 126 contacts substrate. Tyrosine 149 (proton acceptor) is an active-site residue.

It belongs to the NAD(P)-dependent epimerase/dehydratase family.

This is an uncharacterized protein from Bacillus subtilis (strain 168).